Here is a 414-residue protein sequence, read N- to C-terminus: Translation initiation factor 2 subunit gamma (414 aa).

Residues 8–206 form the tr-type G domain; the sequence is QPEVNIGVVG…AIEKFIPTPP (199 aa). A G1 region spans residues 17–24; the sequence is GHVDHGKT. Mg(2+)-binding residues include Asp-20, Thr-24, Gly-45, and Thr-47. Residue 20–25 coordinates GTP; the sequence is DHGKTT. Residues 45–49 form a G2 region; that stretch reads GMTIK. Cys-60, Cys-63, Cys-75, and Cys-77 together coordinate Zn(2+). The interval 93 to 96 is G3; it reads DAPG. GTP is bound by residues 149–152 and 184–186; these read NKVD and SAL. The interval 149-152 is G4; it reads NKVD. The tract at residues 184–186 is G5; that stretch reads SAL.

It belongs to the TRAFAC class translation factor GTPase superfamily. Classic translation factor GTPase family. EIF2G subfamily. As to quaternary structure, heterotrimer composed of an alpha, a beta and a gamma chain. Mg(2+) is required as a cofactor.

The enzyme catalyses GTP + H2O = GDP + phosphate + H(+). EIF-2 functions in the early steps of protein synthesis by forming a ternary complex with GTP and initiator tRNA. This Aeropyrum pernix (strain ATCC 700893 / DSM 11879 / JCM 9820 / NBRC 100138 / K1) protein is Translation initiation factor 2 subunit gamma.